The primary structure comprises 726 residues: Myb-like protein Z (726 aa).

4 disordered regions span residues 15-109 (DSND…SLSN), 124-149 (ASPSKSSENSPTIHTSSLSPNSYHPY), 161-239 (HYVS…TKQQ), and 272-303 (LIPSSPTRSPSGGSGSESEENDGESSPNNMRS). Residues 18 to 39 (DNNNNNNNNNNSNNNNNNNNNN) are compositionally biased toward low complexity. The span at 45–80 (SSATSSPTGQDSTIDRPNSPSSSIKFTYPSKNSIVT) shows a compositional bias: polar residues. Low complexity predominate over residues 81-108 (SPSSLQLPSPSFSSSSSSSSSSSSSSLS). The span at 124-147 (ASPSKSSENSPTIHTSSLSPNSYH) shows a compositional bias: polar residues. The span at 165–177 (NNNNNNNNNNNNN) shows a compositional bias: low complexity. Polar residues predominate over residues 183–209 (SSELYNTSPSISSKTTPNGSSTNNSPF). Low complexity predominate over residues 221 to 239 (NNNNNNNNDRNENNTTKQQ). A Myb-like domain is found at 329–388 (IPIATRKLWSQEECCRLLEMVFQRDPQSVTSKESELRWRSIASTLGRTVTSTRKKYMRLM). Positions 516 to 651 (KQIQQQQKQK…NNNYRSSLSP (136 aa)) are enriched in low complexity. The tract at residues 516–726 (KQIQQQQKQK…NNNNYNNYHN (211 aa)) is disordered. A compositionally biased stretch (polar residues) spans 661-675 (QSPQQKSNNENQQNF). The span at 709 to 726 (NLNNNNNNNNNNYNNYHN) shows a compositional bias: low complexity.

This is Myb-like protein Z (mybZ) from Dictyostelium discoideum (Social amoeba).